Here is a 95-residue protein sequence, read N- to C-terminus: Aspartyl/glutamyl-tRNA(Asn/Gln) amidotransferase subunit C (95 aa).

This sequence belongs to the GatC family. As to quaternary structure, heterotrimer of A, B and C subunits.

It carries out the reaction L-glutamyl-tRNA(Gln) + L-glutamine + ATP + H2O = L-glutaminyl-tRNA(Gln) + L-glutamate + ADP + phosphate + H(+). The catalysed reaction is L-aspartyl-tRNA(Asn) + L-glutamine + ATP + H2O = L-asparaginyl-tRNA(Asn) + L-glutamate + ADP + phosphate + 2 H(+). Allows the formation of correctly charged Asn-tRNA(Asn) or Gln-tRNA(Gln) through the transamidation of misacylated Asp-tRNA(Asn) or Glu-tRNA(Gln) in organisms which lack either or both of asparaginyl-tRNA or glutaminyl-tRNA synthetases. The reaction takes place in the presence of glutamine and ATP through an activated phospho-Asp-tRNA(Asn) or phospho-Glu-tRNA(Gln). The chain is Aspartyl/glutamyl-tRNA(Asn/Gln) amidotransferase subunit C from Nitrobacter winogradskyi (strain ATCC 25391 / DSM 10237 / CIP 104748 / NCIMB 11846 / Nb-255).